Here is a 338-residue protein sequence, read N- to C-terminus: Lipoate-protein ligase A (338 aa).

A BPL/LPL catalytic domain is found at 29-216 (PATQRVLFLW…AFFAHYGERV (188 aa)). Residues Arg-71, 76–79 (GAVF), and Lys-134 each bind ATP. (R)-lipoate is bound at residue Lys-134.

It belongs to the LplA family. As to quaternary structure, monomer.

It is found in the cytoplasm. The catalysed reaction is L-lysyl-[lipoyl-carrier protein] + (R)-lipoate + ATP = N(6)-[(R)-lipoyl]-L-lysyl-[lipoyl-carrier protein] + AMP + diphosphate + H(+). Its pathway is protein modification; protein lipoylation via exogenous pathway; protein N(6)-(lipoyl)lysine from lipoate: step 1/2. It functions in the pathway protein modification; protein lipoylation via exogenous pathway; protein N(6)-(lipoyl)lysine from lipoate: step 2/2. Functionally, catalyzes both the ATP-dependent activation of exogenously supplied lipoate to lipoyl-AMP and the transfer of the activated lipoyl onto the lipoyl domains of lipoate-dependent enzymes. This Salmonella typhimurium (strain LT2 / SGSC1412 / ATCC 700720) protein is Lipoate-protein ligase A.